A 365-amino-acid polypeptide reads, in one-letter code: Probable L-tyrosine/L-aspartate decarboxylase (365 aa).

K224 carries the post-translational modification N6-(pyridoxal phosphate)lysine.

This sequence belongs to the group II decarboxylase family. MfnA subfamily. Requires pyridoxal 5'-phosphate as cofactor.

It carries out the reaction L-tyrosine + H(+) = tyramine + CO2. It catalyses the reaction L-aspartate + H(+) = beta-alanine + CO2. It participates in cofactor biosynthesis; methanofuran biosynthesis. It functions in the pathway cofactor biosynthesis; coenzyme A biosynthesis. Functionally, catalyzes the decarboxylation of L-tyrosine to produce tyramine for methanofuran biosynthesis. Can also catalyze the decarboxylation of L-aspartate to produce beta-alanine for coenzyme A (CoA) biosynthesis. The sequence is that of Probable L-tyrosine/L-aspartate decarboxylase from Methanoculleus marisnigri (strain ATCC 35101 / DSM 1498 / JR1).